A 228-amino-acid chain; its full sequence is Phosphoribosylformylglycinamidine synthase subunit PurQ (228 aa).

In terms of domain architecture, Glutamine amidotransferase type-1 spans 4–226; it reads AVVVFPGSNC…VNYWRETHVV (223 aa). Cys-86 acts as the Nucleophile in catalysis. Active-site residues include His-195 and Glu-197.

Part of the FGAM synthase complex composed of 1 PurL, 1 PurQ and 2 PurS subunits.

The protein resides in the cytoplasm. The catalysed reaction is N(2)-formyl-N(1)-(5-phospho-beta-D-ribosyl)glycinamide + L-glutamine + ATP + H2O = 2-formamido-N(1)-(5-O-phospho-beta-D-ribosyl)acetamidine + L-glutamate + ADP + phosphate + H(+). The enzyme catalyses L-glutamine + H2O = L-glutamate + NH4(+). Its pathway is purine metabolism; IMP biosynthesis via de novo pathway; 5-amino-1-(5-phospho-D-ribosyl)imidazole from N(2)-formyl-N(1)-(5-phospho-D-ribosyl)glycinamide: step 1/2. In terms of biological role, part of the phosphoribosylformylglycinamidine synthase complex involved in the purines biosynthetic pathway. Catalyzes the ATP-dependent conversion of formylglycinamide ribonucleotide (FGAR) and glutamine to yield formylglycinamidine ribonucleotide (FGAM) and glutamate. The FGAM synthase complex is composed of three subunits. PurQ produces an ammonia molecule by converting glutamine to glutamate. PurL transfers the ammonia molecule to FGAR to form FGAM in an ATP-dependent manner. PurS interacts with PurQ and PurL and is thought to assist in the transfer of the ammonia molecule from PurQ to PurL. This chain is Phosphoribosylformylglycinamidine synthase subunit PurQ, found in Geobacillus kaustophilus (strain HTA426).